The sequence spans 524 residues: Putative cysteine ligase BshC (524 aa).

Positions 437-457 (AQALDRSARKINYQIEKMERK) form a coiled coil.

The protein belongs to the BshC family.

In Solibacter usitatus (strain Ellin6076), this protein is Putative cysteine ligase BshC.